Consider the following 574-residue polypeptide: Secreted lipase 1 (574 aa).

An N-terminal signal peptide occupies residues 1–17; the sequence is MKLSLVPIFALLSTAFA. Cys95 and Cys132 are disulfide-bonded. Ser244 acts as the Acyl-ester intermediate in catalysis. Cys303 and Cys312 are joined by a disulfide. A glycan (N-linked (GlcNAc...) asparagine) is linked at Asn323. The active-site Charge relay system is Glu376. N-linked (GlcNAc...) asparagine glycosylation is present at Asn386. The active-site Charge relay system is the His489. An N-linked (GlcNAc...) asparagine glycan is attached at Asn524.

Belongs to the type-B carboxylesterase/lipase family.

Its subcellular location is the secreted. It carries out the reaction a carboxylic ester + H2O = an alcohol + a carboxylate + H(+). Functionally, secreted lipase that allows the use of hydrolyzed lipids as carbon sources. Has highest activity with methyl umbelliferyl oleate (C18:1), whereas much lower activities are obtained with the respective esters of palmitate (C16:0) and stearate (C18:0) (24% and 12% of the activity obtained with umbelliferyl oleate, respectively). Hydrolyzes 1- and 3-positioned ester bonds in preference to 2-positioned ester bonds. The production rate of monoglycerides is lower than that of diacylglycerides. Seems not required for the penetration of intact host tissue. The polypeptide is Secreted lipase 1 (Botryotinia fuckeliana (strain B05.10) (Noble rot fungus)).